Reading from the N-terminus, the 437-residue chain is Adenylosuccinate synthetase (437 aa).

GTP contacts are provided by residues 12–18 (GDEGKGK) and 40–42 (GHT). Asp-13 functions as the Proton acceptor in the catalytic mechanism. Mg(2+) is bound by residues Asp-13 and Gly-40. IMP-binding positions include 13–16 (DEGK), 38–41 (NAGH), Thr-128, Arg-142, Gln-223, Thr-238, and Arg-302. His-41 acts as the Proton donor in catalysis. 298 to 304 (TTTGRRR) is a binding site for substrate. Residues Arg-304, 330 to 332 (KLD), and 412 to 414 (SLG) each bind GTP.

It belongs to the adenylosuccinate synthetase family. In terms of assembly, homodimer. It depends on Mg(2+) as a cofactor.

It localises to the cytoplasm. It carries out the reaction IMP + L-aspartate + GTP = N(6)-(1,2-dicarboxyethyl)-AMP + GDP + phosphate + 2 H(+). The protein operates within purine metabolism; AMP biosynthesis via de novo pathway; AMP from IMP: step 1/2. Its function is as follows. Plays an important role in the de novo pathway of purine nucleotide biosynthesis. Catalyzes the first committed step in the biosynthesis of AMP from IMP. The chain is Adenylosuccinate synthetase from Prochlorococcus marinus (strain MIT 9313).